The chain runs to 145 residues: Bacilliredoxin BLi02578/BL01507 (145 aa).

The protein belongs to the bacilliredoxin family.

This Bacillus licheniformis (strain ATCC 14580 / DSM 13 / JCM 2505 / CCUG 7422 / NBRC 12200 / NCIMB 9375 / NCTC 10341 / NRRL NRS-1264 / Gibson 46) protein is Bacilliredoxin BLi02578/BL01507.